Here is a 389-residue protein sequence, read N- to C-terminus: Glutamate 5-kinase (389 aa).

An ATP-binding site is contributed by lysine 16. 3 residues coordinate substrate: serine 56, aspartate 143, and asparagine 155. 175–176 (SD) contributes to the ATP binding site. Residues 281–358 (AGELHVDEGA…AEIEAILGYA (78 aa)) form the PUA domain.

The protein belongs to the glutamate 5-kinase family.

It is found in the cytoplasm. It carries out the reaction L-glutamate + ATP = L-glutamyl 5-phosphate + ADP. It functions in the pathway amino-acid biosynthesis; L-proline biosynthesis; L-glutamate 5-semialdehyde from L-glutamate: step 1/2. Its function is as follows. Catalyzes the transfer of a phosphate group to glutamate to form L-glutamate 5-phosphate. This is Glutamate 5-kinase from Rhizobium etli (strain ATCC 51251 / DSM 11541 / JCM 21823 / NBRC 15573 / CFN 42).